The sequence spans 609 residues: Zinc metalloproteinase/disintegrin-like HR1a (609 aa).

The signal sequence occupies residues 1–20 (MIQVLLVTICLAVFPYQGSS). The propeptide occupies 21 to 190 (IILGSGNVND…KKASKLVVTA (170 aa)). One can recognise a Peptidase M12B domain in the interval 200-396 (RFIELVIVAD…DEPQCILNEP (197 aa)). 2 residues coordinate Ca(2+): Glu-203 and Asp-287. An N-linked (GlcNAc...) asparagine glycan is attached at Asn-298. 3 cysteine pairs are disulfide-bonded: Cys-311-Cys-391, Cys-351-Cys-375, and Cys-353-Cys-358. Residue His-336 coordinates Zn(2+). The active site involves Glu-337. Residues His-340 and His-346 each contribute to the Zn(2+) site. N-linked (GlcNAc...) asparagine glycosylation occurs at Asn-350. Asn-374 carries an N-linked (GlcNAc...) asparagine glycan. Positions 391 and 394 each coordinate Ca(2+). Residues 397 to 400 (LRTD) constitute a propeptide that is removed on maturation. The Disintegrin domain maps to 404-490 (PPVCGNELLE…DCPTDRFHRN (87 aa)). Ca(2+) is bound by residues Val-406, Asn-409, Leu-411, Glu-413, Glu-416, and Asp-419. 22 disulfides stabilise this stretch: Cys-407–Cys-426, Cys-407–Cys-436, Cys-418–Cys-431, Cys-418–Cys-436, Cys-420–Cys-426, Cys-430–Cys-453, Cys-444–Cys-450, Cys-449–Cys-475, Cys-462–Cys-482, Cys-469–Cys-494, Cys-469–Cys-501, Cys-494–Cys-506, Cys-501–Cys-506, Cys-513–Cys-528, Cys-513–Cys-563, Cys-528–Cys-571, Cys-541–Cys-551, Cys-551–Cys-558, Cys-558–Cys-597, Cys-563–Cys-571, Cys-591–Cys-602, and Cys-597–Cys-602. The D/ECD-tripeptide motif lies at 468 to 470 (ECD). Asp-470, Glu-473, and Asp-485 together coordinate Ca(2+). N-linked (GlcNAc...) asparagine glycosylation occurs at Asn-520.

It belongs to the venom metalloproteinase (M12B) family. P-III subfamily. P-IIIb sub-subfamily. Monomer. Zn(2+) is required as a cofactor. In terms of tissue distribution, expressed by the venom gland.

Its subcellular location is the secreted. Its function is as follows. Zinc protease that induces hemorrhage and has proteolytic activity. Has preference for Ala, His, Pro, Met, and Tyr at the P1 position, in descending order (in vitro). Predominantly prefers Val and Asp at the P3 and P2 positions, respectively. In terms of biological role, inhibits platelet aggregation induced by ADP, thrombin, platelet-activating factor and collagen. Acts by inhibiting fibrinogen interaction with platelet receptors alpha-IIb/beta-3 (ITGA2B/ITGB3). The polypeptide is Zinc metalloproteinase/disintegrin-like HR1a (Protobothrops flavoviridis (Habu)).